The sequence spans 391 residues: 8-amino-7-oxononanoate synthase (391 aa).

Residue arginine 19 participates in substrate binding. A pyridoxal 5'-phosphate-binding site is contributed by 106–107 (GY). Histidine 131 contributes to the substrate binding site. Pyridoxal 5'-phosphate contacts are provided by serine 178, histidine 206, and threonine 234. Lysine 237 bears the N6-(pyridoxal phosphate)lysine mark. Residue threonine 353 coordinates substrate.

Belongs to the class-II pyridoxal-phosphate-dependent aminotransferase family. BioF subfamily. As to quaternary structure, homodimer. It depends on pyridoxal 5'-phosphate as a cofactor.

The catalysed reaction is 6-carboxyhexanoyl-[ACP] + L-alanine + H(+) = (8S)-8-amino-7-oxononanoate + holo-[ACP] + CO2. Its pathway is cofactor biosynthesis; biotin biosynthesis. Catalyzes the decarboxylative condensation of pimeloyl-[acyl-carrier protein] and L-alanine to produce 8-amino-7-oxononanoate (AON), [acyl-carrier protein], and carbon dioxide. In Geobacter sulfurreducens (strain ATCC 51573 / DSM 12127 / PCA), this protein is 8-amino-7-oxononanoate synthase.